The sequence spans 1432 residues: Superkiller protein 3 (1432 aa).

TPR repeat units follow at residues 4–37 (IKQLLKEAKQELTNRDYEETIEISEKVLKLDPDN) and 47–80 (ALSSLPASNNVSSNRNLERATNHYVSAAKLVPDN). The interval 339 to 397 (SANKPPEGHKKTEKETDIKDVDETNEDEVKDRVEDEVKDRVEDEVKDQDEEAKEDEEED) is disordered. A compositionally biased stretch (basic and acidic residues) spans 344 to 381 (PEGHKKTEKETDIKDVDETNEDEVKDRVEDEVKDRVED). The segment covering 382-397 (EVKDQDEEAKEDEEED) has biased composition (acidic residues). TPR repeat units lie at residues 425–458 (ILAHRILCQYYLLTKEYEAALPYIKNGISLIAYN), 471–507 (REFSLDLATVYTYVDAPKDHNAALKLYDNILSGDFSN), 508–541 (IQAKMGKGIIFIERKNWKDAMTLLTQVHEQSPNN), 627–661 (APGFSTLGDIYCHYYKDHLRAFKCYFKAFDLDAGD), 702–735 (NWPFRVVGIAHLEKQEESDSIEWFQSALRVDPND), 736–769 (VESWVGLGQAYHACGRIEASIKVFDKAIQLRPSH), 945–985 (ASYW…QSNT), 987–1018 (ETWIGLGIATMDINFRVSQHCFIKATALEPKA), and 1226–1259 (ISNHICLGLSYFFLNDFDQTLNQFQELLSISKDS).

The protein belongs to the SKI3 family. As to quaternary structure, component of the SKI complex composed of at least SKI2, SKI3 and SKI8. The SKI complex interacts with SKI7, which makes the link between the SKI complex and the exosome in order to perform mRNA degradation.

It is found in the cytoplasm. It localises to the nucleus. In terms of biological role, component of the SKI complex involved in 3'-mRNA degradation pathway. Represses dsRNA virus propagation by specifically blocking translation of viral mRNAs, perhaps recognizing the absence of CAP or poly(A). Essential for cell growth only in the presence of M1 replicon. The protein is Superkiller protein 3 (SKI3) of Saccharomyces cerevisiae (strain ATCC 204508 / S288c) (Baker's yeast).